The chain runs to 599 residues: DNA primase (599 aa).

The CHC2-type zinc-finger motif lies at 38-62 (CPFHQEKTPSFTVSDSKRFFYCFGC). In terms of domain architecture, Toprim spans 250-332 (NYSILVEGYF…EKKISFIRLP (83 aa)). Residues E256, D300, and D302 each contribute to the Mg(2+) site.

The protein belongs to the DnaG primase family. As to quaternary structure, monomer. Interacts with DnaB. Zn(2+) is required as a cofactor. Requires Mg(2+) as cofactor.

The enzyme catalyses ssDNA + n NTP = ssDNA/pppN(pN)n-1 hybrid + (n-1) diphosphate.. In terms of biological role, RNA polymerase that catalyzes the synthesis of short RNA molecules used as primers for DNA polymerase during DNA replication. This Rickettsia bellii (strain RML369-C) protein is DNA primase.